The sequence spans 437 residues: Glycogen synthase (437 aa).

ADP-alpha-D-glucose is bound at residue Lys15.

This sequence belongs to the glycosyltransferase 1 family. Bacterial/plant glycogen synthase subfamily.

It catalyses the reaction [(1-&gt;4)-alpha-D-glucosyl](n) + ADP-alpha-D-glucose = [(1-&gt;4)-alpha-D-glucosyl](n+1) + ADP + H(+). Its pathway is glycan biosynthesis; glycogen biosynthesis. Its function is as follows. Synthesizes alpha-1,4-glucan chains using ADP-glucose. The protein is Glycogen synthase of Thermus thermophilus (strain ATCC BAA-163 / DSM 7039 / HB27).